A 701-amino-acid polypeptide reads, in one-letter code: Ribosomal RNA large subunit methyltransferase K/L (701 aa).

Positions 43-155 (LLYKSLMWSR…NNILHIMLDL (113 aa)) constitute a THUMP domain.

The protein belongs to the methyltransferase superfamily. RlmKL family.

The protein resides in the cytoplasm. It carries out the reaction guanosine(2445) in 23S rRNA + S-adenosyl-L-methionine = N(2)-methylguanosine(2445) in 23S rRNA + S-adenosyl-L-homocysteine + H(+). The enzyme catalyses guanosine(2069) in 23S rRNA + S-adenosyl-L-methionine = N(2)-methylguanosine(2069) in 23S rRNA + S-adenosyl-L-homocysteine + H(+). In terms of biological role, specifically methylates the guanine in position 2445 (m2G2445) and the guanine in position 2069 (m7G2069) of 23S rRNA. This chain is Ribosomal RNA large subunit methyltransferase K/L, found in Buchnera aphidicola subsp. Acyrthosiphon pisum (strain APS) (Acyrthosiphon pisum symbiotic bacterium).